The sequence spans 131 residues: Flagellar assembly factor FliW (131 aa).

This sequence belongs to the FliW family. As to quaternary structure, interacts with translational regulator CsrA and flagellin(s).

Its subcellular location is the cytoplasm. In terms of biological role, acts as an anti-CsrA protein, binds CsrA and prevents it from repressing translation of its target genes, one of which is flagellin. Binds to flagellin and participates in the assembly of the flagellum. This Campylobacter lari (strain RM2100 / D67 / ATCC BAA-1060) protein is Flagellar assembly factor FliW.